We begin with the raw amino-acid sequence, 489 residues long: WD repeat-containing protein JIP5 (489 aa).

Residues 4-45 form a WD 1 repeat; it reads PLSSDALDLCFHPAAETNLLAVGLISGKIQLINYDDYLSSPS. A disordered region spans residues 46–66; that stretch reads SSRTPLAPPSKKSKPSTISSA. A WD 2 repeat occupies 124 to 163; the sequence is EVHDAAPSRVLPVDESLVVTGDDDGVVRLWDVRKGGGKGI. Positions 192–246 are disordered; the sequence is SIKEAKKSKTQLKKQRRRARQAERLKEHDKEKREQNASDTEASEPDSEDDAAIKV. The segment covering 199–210 has biased composition (basic residues); sequence SKTQLKKQRRRA. The segment covering 211–227 has biased composition (basic and acidic residues); the sequence is RQAERLKEHDKEKREQN. Residues 232–241 show a composition bias toward acidic residues; the sequence is EASEPDSEDD. 2 WD repeats span residues 279 to 318 and 323 to 363; these read DQED…LDHV and GHPA…GVIA. Positions 417 to 489 are disordered; it reads IVGLAEDDSD…AGKGGFFSDL (73 aa). Composition is skewed to acidic residues over residues 421-440 and 449-472; these read AEDD…DDDD and DGAE…DSED.

The protein belongs to the WD repeat WDR55 family.

Its subcellular location is the nucleus. The protein localises to the nucleolus. The protein is WD repeat-containing protein JIP5 (JIP5) of Mycosarcoma maydis (Corn smut fungus).